Here is a 1126-residue protein sequence, read N- to C-terminus: [F-actin]-monooxygenase mical2 (1126 aa).

The monooxygenase domain stretch occupies residues 2 to 494; that stretch reads GENGDDKHGR…KHLFITNELQ (493 aa). Residues Cys97, 116–118, 123–125, Phe183, Tyr299, and Asp399 each bind FAD; these read EKR and RNN. Residues 516–619 form the Calponin-homology (CH) domain; it reads DVRPNKLLIW…MVLYLSKFYE (104 aa). Positions 659–680 match the Nuclear localization signal motif; it reads RKRVPKDEKTSDDSDLNKRRKT. Disordered regions lie at residues 748–830 and 892–935; these read AVTA…SLSS and PSLG…SGMS. A compositionally biased stretch (pro residues) spans 792-803; it reads VRPPVQPRPGPA. The span at 805-824 shows a compositional bias: basic and acidic residues; that stretch reads PTRELRVVERAQSHPDDLGR. Positions 918–932 are enriched in low complexity; that stretch reads SSSDSSPSSAPSRKS. Residues 1001-1063 enclose the LIM zinc-binding domain; sequence DTCYFCKRRV…QPHFMHSVTK (63 aa). The Zn(2+) site is built by Cys1003, Cys1006, His1024, Cys1027, Cys1030, Cys1033, Cys1053, and His1056.

This sequence belongs to the Mical family. The cofactor is FAD.

Its subcellular location is the nucleus. The protein localises to the cytoplasm. It carries out the reaction L-methionyl-[F-actin] + NADPH + O2 + H(+) = L-methionyl-(R)-S-oxide-[F-actin] + NADP(+) + H2O. Nuclear monooxygenase that promotes depolymerization of F-actin by mediating oxidation of specific methionine residues on actin and regulates the srf signaling. Acts by modifying nuclear actin subunits through the addition of oxygen to form methionine-sulfoxide, leading to promote actin filament severing and prevent repolymerization. Acts as a key regulator of the srf signaling pathway elicited by nerve growth factor and serum: mediates oxidation and subsequent depolymerization of nuclear actin, leading to increase mkl1/mrtf-a presence in the nucleus and promote srf:mkl1/mrtf-a-dependent gene transcription. This is [F-actin]-monooxygenase mical2 from Xenopus tropicalis (Western clawed frog).